A 292-amino-acid polypeptide reads, in one-letter code: Homoserine kinase (292 aa).

ATP is bound at residue 81-91; sequence RPKSGLGSSGA.

It belongs to the GHMP kinase family. Homoserine kinase subfamily.

It localises to the cytoplasm. The enzyme catalyses L-homoserine + ATP = O-phospho-L-homoserine + ADP + H(+). The protein operates within amino-acid biosynthesis; L-threonine biosynthesis; L-threonine from L-aspartate: step 4/5. Its function is as follows. Catalyzes the ATP-dependent phosphorylation of L-homoserine to L-homoserine phosphate. The sequence is that of Homoserine kinase from Pyrococcus furiosus (strain ATCC 43587 / DSM 3638 / JCM 8422 / Vc1).